A 154-amino-acid polypeptide reads, in one-letter code: 6,7-dimethyl-8-ribityllumazine synthase (154 aa).

5-amino-6-(D-ribitylamino)uracil-binding positions include F22, 56–58, and 80–82; these read AFE and AVI. 85–86 is a (2S)-2-hydroxy-3-oxobutyl phosphate binding site; it reads ST. H88 acts as the Proton donor in catalysis. F113 serves as a coordination point for 5-amino-6-(D-ribitylamino)uracil. Residue R127 participates in (2S)-2-hydroxy-3-oxobutyl phosphate binding.

The protein belongs to the DMRL synthase family.

It carries out the reaction (2S)-2-hydroxy-3-oxobutyl phosphate + 5-amino-6-(D-ribitylamino)uracil = 6,7-dimethyl-8-(1-D-ribityl)lumazine + phosphate + 2 H2O + H(+). It functions in the pathway cofactor biosynthesis; riboflavin biosynthesis; riboflavin from 2-hydroxy-3-oxobutyl phosphate and 5-amino-6-(D-ribitylamino)uracil: step 1/2. Its function is as follows. Catalyzes the formation of 6,7-dimethyl-8-ribityllumazine by condensation of 5-amino-6-(D-ribitylamino)uracil with 3,4-dihydroxy-2-butanone 4-phosphate. This is the penultimate step in the biosynthesis of riboflavin. This Clostridium beijerinckii (strain ATCC 51743 / NCIMB 8052) (Clostridium acetobutylicum) protein is 6,7-dimethyl-8-ribityllumazine synthase.